Reading from the N-terminus, the 175-residue chain is CASP-like protein 2C1 (175 aa).

Residues 1–7 (MVRLRET) are Cytoplasmic-facing. A helical membrane pass occupies residues 8–28 (EVILRLCIVFFILLSSCLIGL). The Extracellular portion of the chain corresponds to 29 to 51 (DSQTKEIAYIHKKVSFRYLLALE). Residues 52-72 (AELYINVVVAAYNLVQIGLGW) form a helical membrane-spanning segment. At 73–91 (YNVEQKTSNPKWFSYLLDQ) the chain is on the cytoplasmic side. Residues 92-112 (TAAYVVFAGTSAAAQHSLLVV) form a helical membrane-spanning segment. The Extracellular segment spans residues 113–136 (TGSRELQWMKWCYKFTRFCFQMGS). Residues 137 to 157 (AIILNYIAAALMVLLSSISAF) traverse the membrane as a helical segment. The Cytoplasmic portion of the chain corresponds to 158–175 (NLFRLYSPKRFFSFKSSS).

The protein belongs to the Casparian strip membrane proteins (CASP) family. In terms of assembly, homodimer and heterodimers.

It localises to the cell membrane. This is CASP-like protein 2C1 from Arabidopsis lyrata subsp. lyrata (Lyre-leaved rock-cress).